Here is a 440-residue protein sequence, read N- to C-terminus: 3-phosphoshikimate 1-carboxyvinyltransferase (440 aa).

Residues lysine 26, serine 27, and arginine 31 each contribute to the 3-phosphoshikimate site. Lysine 26 lines the phosphoenolpyruvate pocket. Glycine 99 and arginine 127 together coordinate phosphoenolpyruvate. 3-phosphoshikimate contacts are provided by serine 172, glutamine 174, aspartate 320, and lysine 347. Position 174 (glutamine 174) interacts with phosphoenolpyruvate. Aspartate 320 serves as the catalytic Proton acceptor. Residues arginine 351 and arginine 392 each contribute to the phosphoenolpyruvate site.

This sequence belongs to the EPSP synthase family. As to quaternary structure, monomer.

It localises to the cytoplasm. It carries out the reaction 3-phosphoshikimate + phosphoenolpyruvate = 5-O-(1-carboxyvinyl)-3-phosphoshikimate + phosphate. It participates in metabolic intermediate biosynthesis; chorismate biosynthesis; chorismate from D-erythrose 4-phosphate and phosphoenolpyruvate: step 6/7. Functionally, catalyzes the transfer of the enolpyruvyl moiety of phosphoenolpyruvate (PEP) to the 5-hydroxyl of shikimate-3-phosphate (S3P) to produce enolpyruvyl shikimate-3-phosphate and inorganic phosphate. The sequence is that of 3-phosphoshikimate 1-carboxyvinyltransferase from Xanthomonas oryzae pv. oryzae (strain MAFF 311018).